The chain runs to 859 residues: Envelope glycoprotein (859 aa).

Residues 1-6 (MVSIAF) constitute a propeptide that is removed on maturation. Residues 7 to 614 (YGGIPGGIST…KDLWSHIGNW (608 aa)) are Extracellular-facing. N40, N112, N141, N148, N186, N214, N233, N244, N340, N368, N399, N406, and N411 each carry an N-linked (GlcNAc...) asparagine; by host glycan. The interval 446 to 466 (FGISAIVAAIVAATAIAASAT) is fusion peptide. N-linked (GlcNAc...) asparagine; by host glycans are attached at residues N483 and N490. The tract at residues 498–513 (LIERQIKILYAMILQT) is immunosuppression. N-linked (GlcNAc...) asparagine; by host glycosylation is found at N550 and N557. Coiled-coil stretches lie at residues 576 to 624 (ILTT…SIIK) and 663 to 699 (KKFH…YYKQ). Residues 615–635 (IPGLGASIIKYIVMFLLIYLL) form a helical membrane-spanning segment. At 636–859 (LTSSPKILRA…TSHVSMPQYV (224 aa)) the chain is on the cytoplasmic side.

The mature envelope protein (Env) consists of a trimer of SU-TM heterodimers attached by noncovalent interactions or by a labile interchain disulfide bond. Specific enzymatic cleavages in vivo yield mature proteins. Envelope glycoproteins are synthesized as an inactive precursor that is N-glycosylated and processed likely by host cell furin or by a furin-like protease in the Golgi to yield the mature SU and TM proteins. The cleavage site between SU and TM requires the minimal sequence [KR]-X-[KR]-R.

It localises to the virion membrane. The protein resides in the host cell membrane. The surface protein (SU) attaches the virus to the host cell by binding to its receptor. This interaction triggers the refolding of the transmembrane protein (TM) and is thought to activate its fusogenic potential by unmasking its fusion peptide. Fusion occurs at the host cell plasma membrane. In terms of biological role, the transmembrane protein (TM) acts as a class I viral fusion protein. Under the current model, the protein has at least 3 conformational states: pre-fusion native state, pre-hairpin intermediate state, and post-fusion hairpin state. During viral and target cell membrane fusion, the coiled coil regions (heptad repeats) assume a trimer-of-hairpins structure, positioning the fusion peptide in close proximity to the C-terminal region of the ectodomain. The formation of this structure appears to drive apposition and subsequent fusion of viral and target cell membranes. Membranes fusion leads to delivery of the nucleocapsid into the cytoplasm. The chain is Envelope glycoprotein (env) from Equus asinus (Donkey).